A 644-amino-acid polypeptide reads, in one-letter code: Chaperone protein DnaK (644 aa).

Thr199 is subject to Phosphothreonine; by autocatalysis. The disordered stretch occupies residues 602 to 644 (LYAEQSAQQQGSAGATGGEQPKADKAADDGVVDAEFEEVKDDK). Positions 604-614 (AEQSAQQQGSA) are enriched in low complexity. The span at 631 to 644 (GVVDAEFEEVKDDK) shows a compositional bias: acidic residues.

It belongs to the heat shock protein 70 family.

In terms of biological role, acts as a chaperone. The chain is Chaperone protein DnaK from Teredinibacter turnerae (strain ATCC 39867 / T7901).